A 1488-amino-acid polypeptide reads, in one-letter code: Phenolphthiocerol/phthiocerol polyketide synthase subunit E (1488 aa).

The Ketosynthase family 3 (KS3) domain occupies 5–438 (ENAIAVVGMA…GTNAHVVLEE (434 aa)). Active-site for beta-ketoacyl synthase activity residues include C184, H320, and H361. Residues 551–868 (VFLFPGQGAQ…GELWSAGVEV (318 aa)) are acyltransferase. S641 functions as the For malonyltransferase activity in the catalytic mechanism. Residues 930 to 1004 (NGESQTEVTL…SLTAAVDASF (75 aa)) enclose the Carrier domain. S965 bears the O-(pantetheine 4'-phosphoryl)serine mark. An NADP(+)-binding site is contributed by 1286 to 1331 (EGVVAVELEGEGRSVLRPDVDLRRTVGWFTTYYPVPLACATGLGAL).

It depends on NADP(+) as a cofactor. Requires pantetheine 4'-phosphate as cofactor.

The catalysed reaction is icosanoyl-[(phenol)carboxyphthiodiolenone synthase] + 2 (S)-methylmalonyl-CoA + 3 malonyl-CoA + 5 NADPH + 10 H(+) = C32-carboxyphthiodiolenone-[(phenol)carboxyphthiodiolenone synthase] + 5 CO2 + 5 NADP(+) + 5 CoA + 2 H2O. It catalyses the reaction docosanoyl-[(phenol)carboxyphthiodiolenone synthase] + 2 (S)-methylmalonyl-CoA + 3 malonyl-CoA + 5 NADPH + 10 H(+) = C34-carboxyphthiodiolenone-[(phenol)carboxyphthiodiolenone synthase] + 5 CO2 + 5 NADP(+) + 5 CoA + 2 H2O. The enzyme catalyses 17-(4-hydroxyphenyl)heptadecanoyl-[(phenol)carboxyphthiodiolenone synthase] + 2 (S)-methylmalonyl-CoA + 3 malonyl-CoA + 5 NADPH + 10 H(+) = C35-(phenol)carboxyphthiodiolenone-[(phenol)carboxyphthiodiolenone synthase] + 5 CO2 + 5 NADP(+) + 5 CoA + 2 H2O. It carries out the reaction 19-(4-hydroxyphenyl)nonadecanoyl-[(phenol)carboxyphthiodiolenone synthase] + 2 (S)-methylmalonyl-CoA + 3 malonyl-CoA + 5 NADPH + 10 H(+) = C37-(phenol)carboxyphthiodiolenone-[(phenol)carboxyphthiodiolenone synthase] + 5 CO2 + 5 NADP(+) + 5 CoA + 2 H2O. It functions in the pathway lipid metabolism; fatty acid biosynthesis. In terms of biological role, part of the PpsABCDE complex involved in the biosynthesis of the lipid core common to phthiocerols and phenolphthiocerols by successive additions of malonyl-CoA or methylmalonyl-CoA extender units. PpsA can accept as substrate the activated forms of either icosanoyl (C20), docosanoyl (C22) or lignoceroyl (C24) groups from FadD26, or a (4-hydroxyphenyl)-C17 or (4-hydroxyphenyl)-C19 fatty acyl from FadD29. PpsA initiates the biosynthesis and extends its substrate using a malonyl-CoA extender unit. The PpsB and PpsC proteins add the second and third malonyl-CoA extender units. PpsD adds an (R)-methylmalonyl unit and PpsE adds a second (R)-methylmalonyl unit. The incorporation of the methylmalonyl units results in formation of two branched methyl groups in the elongated product. The sequence is that of Phenolphthiocerol/phthiocerol polyketide synthase subunit E (ppsE) from Mycobacterium bovis (strain ATCC BAA-935 / AF2122/97).